The sequence spans 418 residues: L-rhamnose isomerase (418 aa).

Residues His262, Asp294, and Asp296 each coordinate Mn(2+).

Belongs to the rhamnose isomerase family. Homotetramer. Mn(2+) serves as cofactor.

Its subcellular location is the cytoplasm. It carries out the reaction L-rhamnopyranose = L-rhamnulose. It participates in carbohydrate degradation; L-rhamnose degradation; glycerone phosphate from L-rhamnose: step 1/3. Functionally, catalyzes the interconversion of L-rhamnose and L-rhamnulose. This Yersinia pseudotuberculosis serotype IB (strain PB1/+) protein is L-rhamnose isomerase.